Reading from the N-terminus, the 143-residue chain is Cofilin (143 aa).

One can recognise an ADF-H domain in the interval 5–137 (GVAVSDEALK…AYESVLEKIS (133 aa)).

It belongs to the actin-binding proteins ADF family.

It localises to the cytoplasm. The protein localises to the cytoskeleton. It is found in the nucleus matrix. Its function is as follows. Controls reversibly actin polymerization and depolymerization in a pH-sensitive manner. It has the ability to bind G- and F-actin in a 1:1 ratio of cofilin to actin. Binding to F-actin is regulated by tropomyosin. It is the major component of intranuclear and cytoplasmic actin rods. Required for accumulation of actin at the cell division site via depolymerizing actin at the cell ends. In association with myosin II has a role in the assembly of the contractile ring via severing actin filaments. Involved in the maintenance of the contractile ring once formed. In association with profilin and capping protein, has a role in the mitotic reorganization of the actin cytoskeleton. The protein is Cofilin (COF1) of Ogataea parapolymorpha (strain ATCC 26012 / BCRC 20466 / JCM 22074 / NRRL Y-7560 / DL-1) (Yeast).